The chain runs to 252 residues: Probable endonuclease 4 (252 aa).

Positions 56, 96, 129, 162, 165, 191, 204, 206, and 233 each coordinate Zn(2+).

The protein belongs to the AP endonuclease 2 family. Zn(2+) serves as cofactor.

The enzyme catalyses Endonucleolytic cleavage to 5'-phosphooligonucleotide end-products.. In terms of biological role, endonuclease IV plays a role in DNA repair. It cleaves phosphodiester bonds at apurinic or apyrimidinic (AP) sites, generating a 3'-hydroxyl group and a 5'-terminal sugar phosphate. The protein is Probable endonuclease 4 of Mycobacterium marinum (strain ATCC BAA-535 / M).